The primary structure comprises 251 residues: Imidazole glycerol phosphate synthase subunit HisF (251 aa).

Residues Asp-11 and Asp-130 contribute to the active site.

Belongs to the HisA/HisF family. Heterodimer of HisH and HisF.

It localises to the cytoplasm. The enzyme catalyses 5-[(5-phospho-1-deoxy-D-ribulos-1-ylimino)methylamino]-1-(5-phospho-beta-D-ribosyl)imidazole-4-carboxamide + L-glutamine = D-erythro-1-(imidazol-4-yl)glycerol 3-phosphate + 5-amino-1-(5-phospho-beta-D-ribosyl)imidazole-4-carboxamide + L-glutamate + H(+). Its pathway is amino-acid biosynthesis; L-histidine biosynthesis; L-histidine from 5-phospho-alpha-D-ribose 1-diphosphate: step 5/9. Its function is as follows. IGPS catalyzes the conversion of PRFAR and glutamine to IGP, AICAR and glutamate. The HisF subunit catalyzes the cyclization activity that produces IGP and AICAR from PRFAR using the ammonia provided by the HisH subunit. This Chlorobium phaeovibrioides (strain DSM 265 / 1930) (Prosthecochloris vibrioformis (strain DSM 265)) protein is Imidazole glycerol phosphate synthase subunit HisF.